The sequence spans 90 residues: Antitoxin epsilon 2 (90 aa).

The protein belongs to the epsilon antitoxin family. In terms of assembly, in the presence of the zeta toxin, forms an inactive PezA(2)PezT(2) heterotetramer.

Functionally, antitoxin component of a type II toxin-antitoxin (TA) system. Neutralizes the toxic effect of zeta toxin. Part of a postsegregational killing (PSK) system involved in the killing of plasmid-free cells. Continuous synthesis of the epsilon antitoxin is required to counteract the zeta toxin. The chain is Antitoxin epsilon 2 from Enterococcus faecalis (Streptococcus faecalis).